Reading from the N-terminus, the 303-residue chain is D-alanine--D-alanine ligase (303 aa).

Positions 100–295 (KQLLRRHGIL…FPALIARLIE (196 aa)) constitute an ATP-grasp domain. 127 to 180 (GLGYPLFVKPNTGGSSLCLSRVTQPEGLAPALEAVFAHCGEAIVEPAIPGVEVT) lines the ATP pocket. Residues Asp-249, Glu-262, and Asn-264 each coordinate Mg(2+).

Belongs to the D-alanine--D-alanine ligase family. Requires Mg(2+) as cofactor. It depends on Mn(2+) as a cofactor.

The protein localises to the cytoplasm. The catalysed reaction is 2 D-alanine + ATP = D-alanyl-D-alanine + ADP + phosphate + H(+). It participates in cell wall biogenesis; peptidoglycan biosynthesis. Cell wall formation. This Nitratidesulfovibrio vulgaris (strain DP4) (Desulfovibrio vulgaris) protein is D-alanine--D-alanine ligase.